A 263-amino-acid chain; its full sequence is Indolethylamine N-methyltransferase (263 aa).

K13 is modified (N6-succinyllysine). S-adenosyl-L-methionine is bound by residues Y20, Y25, 63-64 (GS), Y69, D85, and N90. At K96 the chain carries N6-succinyllysine. S-adenosyl-L-methionine is bound by residues 142 to 143 (DA) and L163.

It belongs to the class I-like SAM-binding methyltransferase superfamily. NNMT/PNMT/TEMT family. As to quaternary structure, monomer. As to expression, highly expressed in lung, also detected in liver and at very low levels in brain.

It is found in the cytoplasm. The enzyme catalyses a tertiary amine + S-adenosyl-L-methionine = a methylated tertiary amine + S-adenosyl-L-homocysteine + H(+). It catalyses the reaction a secondary amine + S-adenosyl-L-methionine = a methylated secondary amine + S-adenosyl-L-homocysteine + H(+). It carries out the reaction a primary amine + S-adenosyl-L-methionine = a methylated primary amine + S-adenosyl-L-homocysteine + H(+). The catalysed reaction is dimethyl sulfide + S-adenosyl-L-methionine = trimethylsulfonium + S-adenosyl-L-homocysteine. Its function is as follows. Catalyzes the N-methylation of tryptamine and structurally related compounds. Functions as a thioether S-methyltransferase and is active with a variety of thioethers and the corresponding selenium and tellurium compounds, including 3-methylthiopropionaldehyde, dimethyl selenide, dimethyl telluride, 2-methylthioethylamine, 2-methylthioethanol, methyl-n-propyl sulfide and diethyl sulfide. Plays an important role in the detoxification of selenium compounds. The protein is Indolethylamine N-methyltransferase (INMT) of Oryctolagus cuniculus (Rabbit).